Reading from the N-terminus, the 242-residue chain is Probable transcriptional regulatory protein lp_2253 (242 aa).

Positions 1–21 are disordered; that stretch reads MSGHSKWHNIQGRKNAQDAKR.

Belongs to the TACO1 family.

The protein resides in the cytoplasm. This chain is Probable transcriptional regulatory protein lp_2253, found in Lactiplantibacillus plantarum (strain ATCC BAA-793 / NCIMB 8826 / WCFS1) (Lactobacillus plantarum).